A 164-amino-acid polypeptide reads, in one-letter code: ATP synthase subunit b 2 (164 aa).

Residues 4–24 (TFWAFVGLVLFLALLAYFKVP) form a helical membrane-spanning segment.

It belongs to the ATPase B chain family. As to quaternary structure, F-type ATPases have 2 components, F(1) - the catalytic core - and F(0) - the membrane proton channel. F(1) has five subunits: alpha(3), beta(3), gamma(1), delta(1), epsilon(1). F(0) has three main subunits: a(1), b(2) and c(10-14). The alpha and beta chains form an alternating ring which encloses part of the gamma chain. F(1) is attached to F(0) by a central stalk formed by the gamma and epsilon chains, while a peripheral stalk is formed by the delta and b chains.

The protein resides in the cell inner membrane. Functionally, f(1)F(0) ATP synthase produces ATP from ADP in the presence of a proton or sodium gradient. F-type ATPases consist of two structural domains, F(1) containing the extramembraneous catalytic core and F(0) containing the membrane proton channel, linked together by a central stalk and a peripheral stalk. During catalysis, ATP synthesis in the catalytic domain of F(1) is coupled via a rotary mechanism of the central stalk subunits to proton translocation. In terms of biological role, component of the F(0) channel, it forms part of the peripheral stalk, linking F(1) to F(0). This Bartonella quintana (strain Toulouse) (Rochalimaea quintana) protein is ATP synthase subunit b 2.